Consider the following 416-residue polypeptide: Glyceraldehyde-3-phosphate dehydrogenase, chloroplastic (416 aa).

The transit peptide at 1–78 (MAFVAPVSSV…APARTSNAPS (78 aa)) directs the protein to the chloroplast. NADP(+) contacts are provided by residues 90 to 91 (RI), Asp114, and Arg158. Residues 232–234 (SCT), Thr263, Arg278, 291–292 (TG), and Arg314 each bind D-glyceraldehyde 3-phosphate. Residue Cys233 is the Nucleophile of the active site. Asn396 contacts NADP(+).

It belongs to the glyceraldehyde-3-phosphate dehydrogenase family. As to quaternary structure, homotetramer.

It is found in the plastid. The protein localises to the chloroplast. The catalysed reaction is D-glyceraldehyde 3-phosphate + phosphate + NADP(+) = (2R)-3-phospho-glyceroyl phosphate + NADPH + H(+). It participates in carbohydrate biosynthesis; Calvin cycle. The sequence is that of Glyceraldehyde-3-phosphate dehydrogenase, chloroplastic (GAPA) from Gracilaria gracilis (Red alga).